A 406-amino-acid polypeptide reads, in one-letter code: Probable mannan endo-1,4-beta-mannosidase C (406 aa).

The signal sequence occupies residues 1 to 20 (MLINFEKVLSLALLAGSVSG). A glycan (N-linked (GlcNAc...) asparagine) is linked at Asn-58. A substrate-binding site is contributed by Trp-80. 2 N-linked (GlcNAc...) asparagine glycosylation sites follow: Asn-86 and Asn-114. Asn-201 contacts substrate. Residue Glu-202 is the Proton donor of the active site. Tyr-287 contributes to the substrate binding site. Glu-320 (nucleophile) is an active-site residue. An N-linked (GlcNAc...) asparagine glycan is attached at Asn-338. Trp-362 contacts substrate.

It belongs to the glycosyl hydrolase 5 (cellulase A) family.

Its subcellular location is the secreted. It catalyses the reaction Random hydrolysis of (1-&gt;4)-beta-D-mannosidic linkages in mannans, galactomannans and glucomannans.. In terms of biological role, endo-1,4-mannanase, a crucial enzyme for depolymerization of seed galactomannans and wood galactoglucomannans. This chain is Probable mannan endo-1,4-beta-mannosidase C (manC), found in Aspergillus terreus (strain NIH 2624 / FGSC A1156).